Here is a 186-residue protein sequence, read N- to C-terminus: Large ribosomal subunit protein bL12c (186 aa).

The span at 1–11 (MASTLSTITLR) shows a compositional bias: polar residues. Disordered regions lie at residues 1 to 23 (MASTLSTITLRSPSPSTASSTHA) and 162 to 186 (EGVSKDEAEDAKKQLEEAGAKVSIA). The N-terminal 53 residues, 1 to 53 (MASTLSTITLRSPSPSTASSTHASIPFPKKALEFPIRTPKLHHRRATFLRPLA), are a transit peptide targeting the chloroplast. Residues 12–23 (SPSPSTASSTHA) show a composition bias toward low complexity. Positions 162–180 (EGVSKDEAEDAKKQLEEAG) are enriched in basic and acidic residues.

It belongs to the bacterial ribosomal protein bL12 family.

The protein localises to the plastid. Its subcellular location is the chloroplast. This chain is Large ribosomal subunit protein bL12c (RPL12), found in Nicotiana tabacum (Common tobacco).